Here is a 142-residue protein sequence, read N- to C-terminus: DNA-directed RNA polymerase subunit omega (142 aa).

A disordered region spans residues 104-142 (FNTDADVDQESTDIQDDEVENEMSNQDSEDIDDEVDNEE). Acidic residues predominate over residues 108–142 (ADVDQESTDIQDDEVENEMSNQDSEDIDDEVDNEE).

This sequence belongs to the RNA polymerase subunit omega family. The RNAP catalytic core consists of 2 alpha, 1 beta, 1 beta' and 1 omega subunit. When a sigma factor is associated with the core the holoenzyme is formed, which can initiate transcription.

It catalyses the reaction RNA(n) + a ribonucleoside 5'-triphosphate = RNA(n+1) + diphosphate. Functionally, promotes RNA polymerase assembly. Latches the N- and C-terminal regions of the beta' subunit thereby facilitating its interaction with the beta and alpha subunits. The sequence is that of DNA-directed RNA polymerase subunit omega from Wolbachia sp. subsp. Brugia malayi (strain TRS).